The following is a 589-amino-acid chain: GTPase LSG1-2 (589 aa).

Residues 1-26 (MGKSEKTSLGRSLVKHHNHMIQESKD) are disordered. The 209-residue stretch at 158 to 366 (WRQLWRVLER…LCDCPGLVFP (209 aa)) folds into the CP-type G domain. The short motif at 176-180 (DARDP) is the DARXP motif element. A G4 region spans residues 206-209 (NKAD). 206 to 209 (NKAD) is a binding site for GTP. The interval 237–239 (AAT) is G5. The tract at residues 315–322 (GYPNVGKS) is G1. 318 to 323 (NVGKSS) provides a ligand contact to GTP. The tract at residues 341-345 (GKTKH) is G2. The interval 359–362 (DCPG) is G3. GTP is bound at residue Gly-362. Over residues 495-509 (GSESDDSAVGDETEN) the composition is skewed to acidic residues. Disordered regions lie at residues 495-515 (GSES…VPGI) and 534-589 (SKKV…LTMR). Residues 534–541 (SKKVTAKK) carry the Nuclear localization signal motif. The segment covering 534 to 558 (SKKVTAKKQTASHKQHKKPQRKKDR) has biased composition (basic residues). Over residues 580 to 589 (PANTGPLTMR) the composition is skewed to polar residues.

This sequence belongs to the TRAFAC class YlqF/YawG GTPase family. As to expression, ubiquitous, with the highest expression in reproductive and strongly dividing tissues.

It is found in the cytoplasm. The protein resides in the nucleus. Its function is as follows. GTPase involved in ribosome biogenesis. Binds to 23S rRNA and associates with 60S pre-ribosomes. Involved in early cotyledon and leaf development. The protein is GTPase LSG1-2 of Arabidopsis thaliana (Mouse-ear cress).